The primary structure comprises 158 residues: Naphthalene 1,2-dioxygenase system, small oxygenase component (158 aa).

The protein belongs to the bacterial ring-hydroxylating dioxygenase beta subunit family. In terms of assembly, the naphthalene dioxygenase (NDO) multicomponent enzyme system is composed of an electron transfer component and a dioxygenase component (iron sulfur protein (ISP)). The electron transfer component is composed of a ferredoxin reductase (NdoR) and a ferredoxin (NdoA), and the dioxygenase component is formed of a heterohexamer (trimer of heterodimers) of three large alpha subunits (NdoB) and three small beta subunits (NdoC).

It functions in the pathway aromatic compound metabolism; naphthalene degradation. Functionally, component of the naphthalene dioxygenase (NDO) multicomponent enzyme system which catalyzes the incorporation of both atoms of molecular oxygen into naphthalene to form cis-(1R,2S)-dihydroxy-1,2-dihydronaphthalene. The beta subunit seems to have a structural role in the holoenzyme. This chain is Naphthalene 1,2-dioxygenase system, small oxygenase component, found in Pseudomonas fluorescens.